A 1553-amino-acid polypeptide reads, in one-letter code: Sodium channel protein PaFPC1 (1553 aa).

The disordered stretch occupies residues 1 to 68; it reads MADNSPLIRE…SAHPDQALEQ (68 aa). Residues 1–140 lie on the Cytoplasmic side of the membrane; sequence MADNSPLIRE…RVAISTMVQP (140 aa). Residues 34 to 60 show a composition bias toward basic and acidic residues; it reads ENGKTEENKDNSRDKGRGANKDRDGSA. A helical membrane pass occupies residues 141–159; that stretch reads IFSYFIMITILIHCIFMIM. Residues 160-165 are Extracellular-facing; that stretch reads PATQTT. A helical transmembrane segment spans residues 166–186; that stretch reads YILELVFLSIYTIEVVVKVLA. At 187 to 200 the chain is on the cytoplasmic side; sequence RGFILHPFAYLRDP. A helical transmembrane segment spans residues 201-218; that stretch reads WNWLDFLVTLIGYITLVV. At 219 to 224 the chain is on the extracellular side; that stretch reads DLGHLY. The helical transmembrane segment at 225 to 241 threads the bilayer; it reads ALRAFRVLRSWRTVTIV. At 242–260 the chain is on the cytoplasmic side; sequence PGWRTIVDALSLSITSLKD. The chain crosses the membrane as a helical span at residues 261-280; the sequence is LVLLLLFSLFVFAVLGLQIY. Over 281-360 the chain is Extracellular; that stretch reads MGVLTQKCVK…PNYGYTSFDT (80 aa). 2 disulfide bridges follow: C288–C337 and C328–C343. N-linked (GlcNAc...) asparagine glycans are attached at residues N300, N308, N312, and N330. Positions 361–385 form an intramembrane region, pore-forming; the sequence is FGWAFLSVFRLVTLDYWEDLYQLAL. E378 is a binding site for saxitoxin. At 386–392 the chain is on the extracellular side; it reads RSAGPWH. Residues 393-413 traverse the membrane as a helical segment; it reads ILFFIIVVFYGTFCFLNFILA. At 414–519 the chain is on the cytoplasmic side; that stretch reads VVVMSYTHMV…GAIGAVVLSP (106 aa). The chain crosses the membrane as a helical span at residues 520–538; the sequence is FFELFIAVIIVLNITFMAL. The Extracellular portion of the chain corresponds to 539 to 549; that stretch reads DHHDMNIEFER. A helical transmembrane segment spans residues 550-569; that stretch reads ILRTGNYIFTSIYIVEAVLK. Topologically, residues 570 to 583 are cytoplasmic; that stretch reads IIALSPKFYFKDSW. The helical transmembrane segment at 584–603 threads the bilayer; it reads NVFDFIIVVFAILELGLEGV. The Extracellular segment spans residues 604-605; that stretch reads QG. A helical transmembrane segment spans residues 606–623; it reads LSVFRSFRLLRVFRLAKF. Topologically, residues 624–639 are cytoplasmic; it reads WPTLNNFMSVMTKSYG. The helical transmembrane segment at 640–658 threads the bilayer; that stretch reads AFVNVMYVMFLLLFIFAII. Residues 659-686 are Extracellular-facing; sequence GMQLFGMNYIDNMERFPDGDLPRWNFTD. The N-linked (GlcNAc...) asparagine glycan is linked to N683. An intramembrane region (pore-forming) is located at residues 687–707; sequence FLHSFMIVFRALCGEWIESMW. Residues E701 and E704 each coordinate tetrodotoxin. Residue E704 participates in saxitoxin binding. Topologically, residues 708-719 are extracellular; the sequence is DCMLVGDWSCIP. Residues C709 and C717 are joined by a disulfide bond. The chain crosses the membrane as a helical span at residues 720 to 740; that stretch reads FFVAVFFVGNLVILNLLIALL. Residues 741-857 lie on the Cytoplasmic side of the membrane; the sequence is LNNYGSFCTS…VCFLLAKNKY (117 aa). The helical transmembrane segment at 858 to 875 threads the bilayer; it reads FQKFVTAVLVITSVLLAL. Over 876–888 the chain is Extracellular; it reads EDIYLPQRPVLVN. A helical membrane pass occupies residues 889-907; sequence ITLYVDYVLTAFFVIEMII. Residues 908-921 are Cytoplasmic-facing; sequence MLFAVGFKKYFTSK. A helical membrane pass occupies residues 922-940; that stretch reads WYWLDFIVVVAYLLNFVLM. The Extracellular portion of the chain corresponds to 941 to 945; sequence CAGIE. The chain crosses the membrane as a helical span at residues 946–964; sequence ALQTLRLLRVFRLFRPLSK. Topologically, residues 965–981 are cytoplasmic; that stretch reads VNGMQVVTSTLVEAVPH. Residues 982-1001 form a helical membrane-spanning segment; the sequence is IFNVILVGIFFWLVFAIMGV. Over 1002–1047 the chain is Extracellular; it reads QLFAGKFYKCVDENSTVLSHEITMDRNDCLHENYTWENSPMNFDHV. Cysteines 1011 and 1030 form a disulfide. N1015 is a glycosylation site (N-linked (GlcNAc...) asparagine). Residue N1028 is glycosylated (N-linked (GlcNAc...) asparagine; atypical). An N-linked (GlcNAc...) asparagine glycan is attached at N1034. Residues 1048–1069 constitute an intramembrane region (pore-forming); the sequence is GNAYLSLLQVATFKGWLQIMND. G1062 lines the tetrodotoxin pocket. W1063 is a saxitoxin binding site. Residues 1070-1086 lie on the Extracellular side of the membrane; the sequence is AIDSREVHKQPIRETNI. The chain crosses the membrane as a helical span at residues 1087–1108; sequence YMYLYFIFFIVFGSFFILKLFV. Residues 1109–1171 lie on the Cytoplasmic side of the membrane; sequence CILIDIFRQQ…LMYDISVNRK (63 aa). Residues 1133–1146 are linker region that may regulate channel inactivation; that stretch reads QLIYRRAVMRTMSA. The chain crosses the membrane as a helical span at residues 1172–1189; sequence FEYTMMILIILNVAVMAI. Residues 1190 to 1200 lie on the Extracellular side of the membrane; the sequence is DHYGQSMEFSE. Residues 1201-1219 form a helical membrane-spanning segment; sequence VLDYLNLIFIIIFFVECVI. Over 1220-1231 the chain is Cytoplasmic; sequence KVSGLRHHYFKD. Residues 1232–1249 form a helical membrane-spanning segment; that stretch reads PWNIIDFLYVVLAIAGLM. Residues 1250–1262 are Extracellular-facing; the sequence is LSDVIEKYFISPT. The helical transmembrane segment at 1263–1279 threads the bilayer; it reads LLRILRILRVGRLLRYF. Topologically, residues 1280–1298 are cytoplasmic; that stretch reads QSARGMRLLLLALRKALRT. The helical transmembrane segment at 1299-1316 threads the bilayer; sequence LFNVSFLLFVIMFVYAVF. Residues 1317–1338 are Extracellular-facing; sequence GMEFFMHIRDAGAIDDVYNFKT. The pore-forming intramembrane region spans 1339–1361; it reads FGQSIILLFQLATSAGWDGVYFA. Positions 1354 and 1356 each coordinate tetrodotoxin. A saxitoxin-binding site is contributed by D1356. The Extracellular portion of the chain corresponds to 1362-1387; sequence IANEEDCRAPDHELGYPGNCGSRALG. The cysteines at positions 1368 and 1381 are disulfide-linked. Residues 1388-1410 form a helical membrane-spanning segment; sequence IAYLVSYLIITCLVVINMYAAVI. Over 1411–1553 the chain is Cytoplasmic; it reads LDYVLEVYED…NAWRKHKQQN (143 aa).

It belongs to the sodium channel (TC 1.A.1.10) family. Detected in adult nerve cord, muscle, gut and mushroom-shaped accessory glands.

It localises to the cell membrane. Its activity is regulated as follows. Inhibited by the pore blockers saxitoxin and tetrodotoxin. Mediates the voltage-dependent sodium ion permeability of excitable membranes. This chain is Sodium channel protein PaFPC1, found in Periplaneta americana (American cockroach).